We begin with the raw amino-acid sequence, 828 residues long: Periplasmic nitrate reductase (828 aa).

Residues methionine 1 to alanine 31 constitute a signal peptide (tat-type signal). The region spanning isoleucine 39–aspartate 95 is the 4Fe-4S Mo/W bis-MGD-type domain. The [4Fe-4S] cluster site is built by cysteine 46, cysteine 49, cysteine 53, and cysteine 81. Mo-bis(molybdopterin guanine dinucleotide)-binding positions include lysine 83, glutamine 150, asparagine 175, cysteine 179, tryptophan 212–methionine 219, serine 243–histidine 247, glutamine 262–aspartate 264, methionine 372, glutamine 376, asparagine 482, serine 508–aspartate 509, lysine 531, aspartate 558, and threonine 718–threonine 727. Phenylalanine 794 contacts substrate. Mo-bis(molybdopterin guanine dinucleotide) is bound by residues asparagine 802 and lysine 819.

This sequence belongs to the prokaryotic molybdopterin-containing oxidoreductase family. NasA/NapA/NarB subfamily. In terms of assembly, component of the periplasmic nitrate reductase NapAB complex composed of NapA and NapB. [4Fe-4S] cluster serves as cofactor. Mo-bis(molybdopterin guanine dinucleotide) is required as a cofactor. Post-translationally, predicted to be exported by the Tat system. The position of the signal peptide cleavage has not been experimentally proven.

It is found in the periplasm. The enzyme catalyses 2 Fe(II)-[cytochrome] + nitrate + 2 H(+) = 2 Fe(III)-[cytochrome] + nitrite + H2O. Its function is as follows. Catalytic subunit of the periplasmic nitrate reductase complex NapAB. Receives electrons from NapB and catalyzes the reduction of nitrate to nitrite. The polypeptide is Periplasmic nitrate reductase (Shigella dysenteriae serotype 1 (strain Sd197)).